Here is a 332-residue protein sequence, read N- to C-terminus: MSMPGLGYLILTFVVLLLLVLFFSFVPVGLWISAAAADVRVGIFYMIGMKLRRVPPHRIVNALIKAEKAGLEISIDKLEAHYLAGGNVDRVIDALIAAQRAGIDLVFERAAAIDLAGRNVLEAVQMSVNPKVIETPVVAGVAQDGIELRAKARVTVRADINRLVGGAGEDTIIARVGEGVVSTIGSAASHKEVLENPDMISRTVLAKGLDAGTAFEIVSIDIADVDVGANIGARLRADQAEAEKVMAQAKAEERRAMAVAEEQEMRAETQRMRAKVVEAEAEVPRALAQALREGRIGVMEYLMMQNLQADTAMREALGGGQRGGQPGGQDQK.

Helical transmembrane passes span 6–26 (LGYL…FSFV) and 28–48 (VGLW…YMIG).

It belongs to the flotillin-like FloA family. In terms of assembly, homooligomerizes.

The protein localises to the cell membrane. Its subcellular location is the membrane raft. Its function is as follows. Found in functional membrane microdomains (FMM) that may be equivalent to eukaryotic membrane rafts. FMMs are highly dynamic and increase in number as cells age. Flotillins are thought to be important factors in membrane fluidity. This is Flotillin-like protein FloA from Symbiobacterium thermophilum (strain DSM 24528 / JCM 14929 / IAM 14863 / T).